The primary structure comprises 457 residues: Bifunctional protein GlmU (457 aa).

The interval 1–230 (MSKRYAVVLA…FEESLGVNDR (230 aa)) is pyrophosphorylase. Residues 9 to 12 (LAAG), Lys23, Gln73, and 78 to 79 (GT) contribute to the UDP-N-acetyl-alpha-D-glucosamine site. Asp103 contacts Mg(2+). Residues Gly140, Glu155, Asn170, and Asn228 each contribute to the UDP-N-acetyl-alpha-D-glucosamine site. Residue Asn228 coordinates Mg(2+). The interval 231-251 (IALAEASRLMQRRINENHMRN) is linker. The N-acetyltransferase stretch occupies residues 252-457 (GVTLVNPENT…GYAKHLNHGK (206 aa)). 2 residues coordinate UDP-N-acetyl-alpha-D-glucosamine: Arg333 and Lys351. His363 serves as the catalytic Proton acceptor. 2 residues coordinate UDP-N-acetyl-alpha-D-glucosamine: Tyr366 and Asn377. Residues 386-387 (NY), Ala423, and Arg440 each bind acetyl-CoA.

In the N-terminal section; belongs to the N-acetylglucosamine-1-phosphate uridyltransferase family. The protein in the C-terminal section; belongs to the transferase hexapeptide repeat family. In terms of assembly, homotrimer. Requires Mg(2+) as cofactor.

It localises to the cytoplasm. The enzyme catalyses alpha-D-glucosamine 1-phosphate + acetyl-CoA = N-acetyl-alpha-D-glucosamine 1-phosphate + CoA + H(+). It carries out the reaction N-acetyl-alpha-D-glucosamine 1-phosphate + UTP + H(+) = UDP-N-acetyl-alpha-D-glucosamine + diphosphate. Its pathway is nucleotide-sugar biosynthesis; UDP-N-acetyl-alpha-D-glucosamine biosynthesis; N-acetyl-alpha-D-glucosamine 1-phosphate from alpha-D-glucosamine 6-phosphate (route II): step 2/2. It participates in nucleotide-sugar biosynthesis; UDP-N-acetyl-alpha-D-glucosamine biosynthesis; UDP-N-acetyl-alpha-D-glucosamine from N-acetyl-alpha-D-glucosamine 1-phosphate: step 1/1. The protein operates within bacterial outer membrane biogenesis; LPS lipid A biosynthesis. Catalyzes the last two sequential reactions in the de novo biosynthetic pathway for UDP-N-acetylglucosamine (UDP-GlcNAc). The C-terminal domain catalyzes the transfer of acetyl group from acetyl coenzyme A to glucosamine-1-phosphate (GlcN-1-P) to produce N-acetylglucosamine-1-phosphate (GlcNAc-1-P), which is converted into UDP-GlcNAc by the transfer of uridine 5-monophosphate (from uridine 5-triphosphate), a reaction catalyzed by the N-terminal domain. This chain is Bifunctional protein GlmU, found in Listeria monocytogenes serotype 4b (strain F2365).